The chain runs to 415 residues: Enolase (415 aa).

Residue glutamine 161 coordinates (2R)-2-phosphoglycerate. Catalysis depends on glutamate 203, which acts as the Proton donor. Mg(2+)-binding residues include aspartate 240, glutamate 281, and aspartate 308. (2R)-2-phosphoglycerate-binding residues include lysine 333, arginine 362, serine 363, and lysine 384. Lysine 333 serves as the catalytic Proton acceptor.

Belongs to the enolase family. Mg(2+) serves as cofactor.

Its subcellular location is the cytoplasm. It localises to the secreted. It is found in the cell surface. It catalyses the reaction (2R)-2-phosphoglycerate = phosphoenolpyruvate + H2O. It participates in carbohydrate degradation; glycolysis; pyruvate from D-glyceraldehyde 3-phosphate: step 4/5. In terms of biological role, catalyzes the reversible conversion of 2-phosphoglycerate (2-PG) into phosphoenolpyruvate (PEP). It is essential for the degradation of carbohydrates via glycolysis. The chain is Enolase from Campylobacter hominis (strain ATCC BAA-381 / DSM 21671 / CCUG 45161 / LMG 19568 / NCTC 13146 / CH001A).